The following is a 299-amino-acid chain: Oxygen-dependent coproporphyrinogen-III oxidase (299 aa).

S92 is a substrate binding site. The a divalent metal cation site is built by H96 and H106. H106 serves as the catalytic Proton donor. 108-110 (NVR) serves as a coordination point for substrate. 2 residues coordinate a divalent metal cation: H145 and H175. Residues 240 to 275 (YVEFNLVWDRGTLFGLQTGGRTESILMSMPPLVRWE) form an important for dimerization region. A substrate-binding site is contributed by 258–260 (GGR).

Belongs to the aerobic coproporphyrinogen-III oxidase family. Homodimer. It depends on a divalent metal cation as a cofactor.

It localises to the cytoplasm. The catalysed reaction is coproporphyrinogen III + O2 + 2 H(+) = protoporphyrinogen IX + 2 CO2 + 2 H2O. It functions in the pathway porphyrin-containing compound metabolism; protoporphyrin-IX biosynthesis; protoporphyrinogen-IX from coproporphyrinogen-III (O2 route): step 1/1. Its function is as follows. Involved in the heme biosynthesis. Catalyzes the aerobic oxidative decarboxylation of propionate groups of rings A and B of coproporphyrinogen-III to yield the vinyl groups in protoporphyrinogen-IX. In Salmonella arizonae (strain ATCC BAA-731 / CDC346-86 / RSK2980), this protein is Oxygen-dependent coproporphyrinogen-III oxidase.